The chain runs to 217 residues: MSEAMMWLMARGVWETLMMTFVSGFFGFVLGLPVGVLLYVTRPGQIIANNKIYRTLSGVVNIFRSIPFIILLVWMIPFTRMIVGTSIGLQAAIVPLTVGAAPFIARMVENALLEIPSGLVEAARAMGATPMQIIKKVLLPEALPGLVNAATITLITLVGYSAMGGAVGAGGLGQIGYQYGYIGYNATVMNTVLVLLVILVYLIQLSGDRIVKAVTHK.

The 192-residue stretch at 13-204 folds into the ABC transmembrane type-1 domain; it reads VWETLMMTFV…LLVILVYLIQ (192 aa). Transmembrane regions (helical) follow at residues 20–40, 58–78, 81–101, 152–172, and 186–206; these read TFVS…LLYV, GVVN…MIPF, MIVG…VGAA, ITLI…AGGL, and ATVM…IQLS.

This sequence belongs to the binding-protein-dependent transport system permease family. CysTW subfamily.

It localises to the cell inner membrane. In terms of biological role, part of the binding-protein-dependent transport system for D-methionine and the toxic methionine analog alpha-methyl-methionine. Probably responsible for the translocation of the substrate across the membrane. The protein is D-methionine transport system permease protein MetI (metI) of Yersinia pestis.